The primary structure comprises 412 residues: Serine hydroxymethyltransferase (412 aa).

(6S)-5,6,7,8-tetrahydrofolate is bound by residues Leu-117 and 121–123 (GHL). N6-(pyridoxal phosphate)lysine is present on Lys-226.

This sequence belongs to the SHMT family. Homodimer. Requires pyridoxal 5'-phosphate as cofactor.

It localises to the cytoplasm. The catalysed reaction is (6R)-5,10-methylene-5,6,7,8-tetrahydrofolate + glycine + H2O = (6S)-5,6,7,8-tetrahydrofolate + L-serine. The protein operates within one-carbon metabolism; tetrahydrofolate interconversion. It functions in the pathway amino-acid biosynthesis; glycine biosynthesis; glycine from L-serine: step 1/1. Its function is as follows. Catalyzes the reversible interconversion of serine and glycine with tetrahydrofolate (THF) serving as the one-carbon carrier. This reaction serves as the major source of one-carbon groups required for the biosynthesis of purines, thymidylate, methionine, and other important biomolecules. Also exhibits THF-independent aldolase activity toward beta-hydroxyamino acids, producing glycine and aldehydes, via a retro-aldol mechanism. This chain is Serine hydroxymethyltransferase, found in Staphylococcus saprophyticus subsp. saprophyticus (strain ATCC 15305 / DSM 20229 / NCIMB 8711 / NCTC 7292 / S-41).